A 121-amino-acid chain; its full sequence is Nitrogen fixation nifHD region GlnB-like protein 2 (121 aa).

Belongs to the P(II) protein family.

Its function is as follows. Could be involved in the regulation of nitrogen fixation. This chain is Nitrogen fixation nifHD region GlnB-like protein 2 (glnBB), found in Methanothermobacter marburgensis (strain ATCC BAA-927 / DSM 2133 / JCM 14651 / NBRC 100331 / OCM 82 / Marburg) (Methanobacterium thermoautotrophicum).